A 147-amino-acid chain; its full sequence is Microsomal glutathione S-transferase 2 (147 aa).

Helical transmembrane passes span 6–26 (ILLA…ALQV), 59–79 (FYPI…QVFA), and 111–131 (SLGI…NSFL).

The protein belongs to the MAPEG family. In terms of assembly, homotrimer. Liver, spleen, skeletal muscle, heart, adrenals, pancreas, prostate, testis, fetal liver, and fetal spleen. Very low expression in lung, brain, placenta and bone marrow. Abundantly expressed in human umbilical vein endothelial cells (at protein level).

The protein localises to the endoplasmic reticulum membrane. It is found in the microsome membrane. The enzyme catalyses RX + glutathione = an S-substituted glutathione + a halide anion + H(+). It carries out the reaction 1-chloro-2,4-dinitrobenzene + glutathione = 2,4-dinitrophenyl-S-glutathione + chloride + H(+). The catalysed reaction is leukotriene C4 = leukotriene A4 + glutathione. It catalyses the reaction (5S)-hydroperoxy-(6E,8Z,11Z,14Z)-eicosatetraenoate + 2 glutathione = (5S)-hydroxy-(6E,8Z,11Z,14Z)-eicosatetraenoate + glutathione disulfide + H2O. With respect to regulation, each monomer can bind on GSH molecule but only one subunit is catalytically active. Functionally, catalyzes several different glutathione-dependent reactions. Catalyzes the glutathione-dependent reduction of lipid hydroperoxides, such as 5-HPETE. Has glutathione transferase activity, toward xenobiotic electrophiles, such as 1-chloro-2, 4-dinitrobenzene (CDNB). Also catalyzes the conjugation of leukotriene A4 with reduced glutathione to form leukotriene C4 (LTC4). Involved in oxidative DNA damage induced by ER stress and anticancer agents by activating LTC4 biosynthetic machinery in nonimmune cells. The protein is Microsomal glutathione S-transferase 2 (MGST2) of Homo sapiens (Human).